Consider the following 147-residue polypeptide: MYAIVEIAGQQFKVSKDLKVYVHRLANEEGSKVSFDKVLLLDDNGNVTLGAPAIEGASVEAKVLQHLKGDKVIVFKKKRRKGYKKRNGHRQYLTQIVIEGITAAGGTKKAAAKKAVVAEEAAATEEVEAAPKAKKAAPKAKKEATKE.

Residues 125 to 147 (EEVEAAPKAKKAAPKAKKEATKE) are disordered.

Belongs to the bacterial ribosomal protein bL21 family. Part of the 50S ribosomal subunit. Contacts protein L20.

Functionally, this protein binds to 23S rRNA in the presence of protein L20. The sequence is that of Large ribosomal subunit protein bL21 from Flavobacterium johnsoniae (strain ATCC 17061 / DSM 2064 / JCM 8514 / BCRC 14874 / CCUG 350202 / NBRC 14942 / NCIMB 11054 / UW101) (Cytophaga johnsonae).